Reading from the N-terminus, the 792-residue chain is Ubiquitin carboxyl-terminal hydrolase 10 (792 aa).

Ala-2 carries the N-acetylalanine modification. Residues 2–99 are interaction with p53/TP53; sequence ALHNPQYIFG…ILGCTTSKKI (98 aa). The G3BP1-binding stretch occupies residues 6–21; sequence PQYIFGDFSPDEFNQF. Thr-24 carries the post-translational modification Phosphothreonine. Residues 126 to 164 form a disordered region; sequence SNAEAETLENDSGAGGLGQRERKKKKKRPPGYYSYLKDG. Ser-208 and Ser-223 each carry phosphoserine. Over residues 300–309 the composition is skewed to basic and acidic residues; that stretch reads DEGADLDPAK. Residues 300–323 are disordered; the sequence is DEGADLDPAKPESQSPPAESALSA. At Ser-314 the chain carries Phosphoserine. Ser-330 carries the phosphoserine; by ATM modification. A disordered region spans residues 350–369; that stretch reads PMAYVETKCSPPVPSPLASE. Phosphoserine occurs at positions 359 and 364. In terms of domain architecture, USP spans 409-789; the sequence is RGLINKGNWC…TAYLLYYRRV (381 aa). Cys-418 acts as the Nucleophile in catalysis. Phosphoserine is present on Ser-541. The segment at 542-580 is disordered; sequence PTHEKHSVSNGPRSDLIEDEELEDTGKGSEDEWEQVGPK. Thr-566 carries the post-translational modification Phosphothreonine. Phosphoserine is present on Ser-570. The active-site Proton acceptor is His-743.

This sequence belongs to the peptidase C19 family. USP10 subfamily. As to quaternary structure, found in a deubiquitination complex with TANK, USP10 and ZC3H12A; this complex inhibits genotoxic stress- or interleukin-1-beta (IL1B)-mediated NF-kappa-B activation by promoting IKBKG or TRAF6 deubiquitination. Interacts with IKBKG; this interaction increases in response to DNA damage. Interacts with TANK; this interaction increases in response to DNA damage. Interacts with TRAF6; this interaction increases in response to DNA damage. Interacts with ZC3H12A; this interaction increases in response to DNA damage. Interacts with G3BP1 (via NTF2 domain) and G3BP2 (via NTF2 domain); inhibiting stress granule formation. Phosphorylated by ATM following DNA damage, leading to stabilization and translocation it to the nucleus. In terms of processing, ubiquitinated. Deubiquitinated by USP13.

It is found in the cytoplasm. The protein resides in the nucleus. It localises to the early endosome. The enzyme catalyses Thiol-dependent hydrolysis of ester, thioester, amide, peptide and isopeptide bonds formed by the C-terminal Gly of ubiquitin (a 76-residue protein attached to proteins as an intracellular targeting signal).. Specifically inhibited by spautin-1 (specific and potent autophagy inhibitor-1), a derivative of MBCQ that binds to USP10 and inhibits deubiquitinase activity. Regulated by PIK3C3/VPS34-containing complexes. Hydrolase that can remove conjugated ubiquitin from target proteins such as p53/TP53, RPS2/us5, RPS3/us3, RPS10/eS10, BECN1, SNX3 and CFTR. Acts as an essential regulator of p53/TP53 stability: in unstressed cells, specifically deubiquitinates p53/TP53 in the cytoplasm, leading to counteract MDM2 action and stabilize p53/TP53. Following DNA damage, translocates to the nucleus and deubiquitinates p53/TP53, leading to regulate the p53/TP53-dependent DNA damage response. Component of a regulatory loop that controls autophagy and p53/TP53 levels: mediates deubiquitination of BECN1, a key regulator of autophagy, leading to stabilize the PIK3C3/VPS34-containing complexes. In turn, PIK3C3/VPS34-containing complexes regulate USP10 stability, suggesting the existence of a regulatory system by which PIK3C3/VPS34-containing complexes regulate p53/TP53 protein levels via USP10 and USP13. Does not deubiquitinate MDM2. Plays a key role in 40S ribosome subunit recycling when a ribosome has stalled during translation: acts both by inhibiting formation of stress granules, which store stalled translation pre-initiation complexes, and mediating deubiquitination of 40S ribosome subunits. Acts as a negative regulator of stress granules formation by lowering G3BP1 and G3BP2 valence, thereby preventing G3BP1 and G3BP2 ability to undergo liquid-liquid phase separation (LLPS) and assembly of stress granules. Promotes 40S ribosome subunit recycling following ribosome dissociation in response to ribosome stalling by mediating deubiquitination of 40S ribosomal proteins RPS2/us5, RPS3/us3 and RPS10/eS10, thereby preventing their degradation by the proteasome. Part of a ribosome quality control that takes place when ribosomes have stalled during translation initiation (iRQC): USP10 acts by removing monoubiquitination of RPS2/us5 and RPS3/us3, promoting 40S ribosomal subunit recycling. Deubiquitinates CFTR in early endosomes, enhancing its endocytic recycling. Involved in a TANK-dependent negative feedback response to attenuate NF-kappa-B activation via deubiquitinating IKBKG or TRAF6 in response to interleukin-1-beta (IL1B) stimulation or upon DNA damage. Deubiquitinates TBX21 leading to its stabilization. Plays a negative role in the RLR signaling pathway upon RNA virus infection by blocking the RIGI-mediated MAVS activation. Mechanistically, removes the unanchored 'Lys-63'-linked polyubiquitin chains of MAVS to inhibit its aggregation, essential for its activation. The protein is Ubiquitin carboxyl-terminal hydrolase 10 (Usp10) of Mus musculus (Mouse).